A 125-amino-acid polypeptide reads, in one-letter code: Small ribosomal subunit protein uS11 (125 aa).

Belongs to the universal ribosomal protein uS11 family. Part of the 30S ribosomal subunit. Interacts with proteins S7 and S18. Binds to IF-3.

Located on the platform of the 30S subunit, it bridges several disparate RNA helices of the 16S rRNA. Forms part of the Shine-Dalgarno cleft in the 70S ribosome. This chain is Small ribosomal subunit protein uS11, found in Coprothermobacter proteolyticus (strain ATCC 35245 / DSM 5265 / OCM 4 / BT).